Reading from the N-terminus, the 278-residue chain is Troponin T, slow skeletal muscle (278 aa).

A compositionally biased stretch (acidic residues) spans 1 to 37 (MSDTEEQEYEEEQPEEEAAEEEEEAPEEPEPVAEPEE). Disordered regions lie at residues 1–63 (MSDT…RVDF) and 105–153 (RRRS…KKKV). Position 2 is a phosphoserine; by CK2 (Ser2). Over residues 43 to 55 (SRPVVPPLIPPKI) the composition is skewed to pro residues. Basic and acidic residues predominate over residues 105-149 (RRRSERAEQQRFRTEKERERQAKLAEEKMRKEEEEAKKRAEDDAK).

It belongs to the troponin T family. In terms of assembly, interacts with TPM3.

In terms of biological role, troponin T is the tropomyosin-binding subunit of troponin, the thin filament regulatory complex which confers calcium-sensitivity to striated muscle actomyosin ATPase activity. This is Troponin T, slow skeletal muscle (TNNT1) from Homo sapiens (Human).